We begin with the raw amino-acid sequence, 148 residues long: RING finger protein 24 (148 aa).

A helical transmembrane segment spans residues 24–44; the sequence is IYIVVFGTAIFVFILSLLFCC. Residues 78-119 form an RING-type zinc finger; the sequence is CAVCLEDFKPRDELGICPCKHAFHRKCLIKWLEVRKVCPLCN.

Interacts with TRPC1, TRPC3, TRPC4, TRPC5, TRPC6 and TRPC7.

It is found in the golgi apparatus membrane. May play a role in TRPCs intracellular trafficking. The sequence is that of RING finger protein 24 (RNF24) from Homo sapiens (Human).